The sequence spans 77 residues: Small ribosomal subunit protein bS18 (77 aa).

It belongs to the bacterial ribosomal protein bS18 family. Part of the 30S ribosomal subunit. Forms a tight heterodimer with protein bS6.

Functionally, binds as a heterodimer with protein bS6 to the central domain of the 16S rRNA, where it helps stabilize the platform of the 30S subunit. The protein is Small ribosomal subunit protein bS18 of Lactobacillus helveticus (strain DPC 4571).